The sequence spans 351 residues: Probable dual-specificity RNA methyltransferase RlmN (351 aa).

Residue E97 is the Proton acceptor of the active site. The region spanning 103–337 (YDYGNTVCIS…VTVRKERGVD (235 aa)) is the Radical SAM core domain. A disulfide bond links C110 and C342. The [4Fe-4S] cluster site is built by C117, C121, and C124. S-adenosyl-L-methionine-binding positions include 166–167 (GE), S198, 221–223 (SLH), and N299. Catalysis depends on C342, which acts as the S-methylcysteine intermediate.

Belongs to the radical SAM superfamily. RlmN family. [4Fe-4S] cluster is required as a cofactor.

It localises to the cytoplasm. The catalysed reaction is adenosine(2503) in 23S rRNA + 2 reduced [2Fe-2S]-[ferredoxin] + 2 S-adenosyl-L-methionine = 2-methyladenosine(2503) in 23S rRNA + 5'-deoxyadenosine + L-methionine + 2 oxidized [2Fe-2S]-[ferredoxin] + S-adenosyl-L-homocysteine. The enzyme catalyses adenosine(37) in tRNA + 2 reduced [2Fe-2S]-[ferredoxin] + 2 S-adenosyl-L-methionine = 2-methyladenosine(37) in tRNA + 5'-deoxyadenosine + L-methionine + 2 oxidized [2Fe-2S]-[ferredoxin] + S-adenosyl-L-homocysteine. Its function is as follows. Specifically methylates position 2 of adenine 2503 in 23S rRNA and position 2 of adenine 37 in tRNAs. This is Probable dual-specificity RNA methyltransferase RlmN from Natranaerobius thermophilus (strain ATCC BAA-1301 / DSM 18059 / JW/NM-WN-LF).